The primary structure comprises 705 residues: Prolyl endopeptidase (705 aa).

The N-terminal stretch at 1–20 (MKYNKLSVAVAAFAFAAVSA) is a signal peptide. Active-site charge relay system residues include S556 and H675.

The protein belongs to the peptidase S9A family. In terms of assembly, monomer.

It localises to the periplasm. The enzyme catalyses Hydrolysis of Pro-|-Xaa &gt;&gt; Ala-|-Xaa in oligopeptides.. Cleaves peptide bonds on the C-terminal side of prolyl residues within peptides that are up to approximately 30 amino acids long. Has an absolute requirement for an X-Pro bond in the trans configuration immediately preceding the Pro-Y scissible bond. This is Prolyl endopeptidase (f1pep1) from Elizabethkingia meningoseptica (Chryseobacterium meningosepticum).